Reading from the N-terminus, the 77-residue chain is Sec-independent protein translocase protein TatA (77 aa).

Residues 3-23 (VFGIGLPELIVILVVALLIFG) traverse the membrane as a helical segment. A disordered region spans residues 56 to 77 (TAALEEEQQAKAEAESPREISP). Residues 63-77 (QQAKAEAESPREISP) are compositionally biased toward basic and acidic residues.

Belongs to the TatA/E family. As to quaternary structure, forms a complex with TatC.

The protein localises to the cell inner membrane. In terms of biological role, part of the twin-arginine translocation (Tat) system that transports large folded proteins containing a characteristic twin-arginine motif in their signal peptide across membranes. TatA could form the protein-conducting channel of the Tat system. In Thermosynechococcus vestitus (strain NIES-2133 / IAM M-273 / BP-1), this protein is Sec-independent protein translocase protein TatA.